A 1106-amino-acid polypeptide reads, in one-letter code: Inversin (1106 aa).

ANK repeat units follow at residues 13-42 (SLAS…ELKD), 47-76 (FGRT…DVNR), 80-110 (SRRT…WMQK), 113-144 (EGMT…EVDT), 148-177 (NKQT…NIGI), 181-213 (EGKI…TESL), 220-250 (EGRT…NVTS), 254-285 (LFRT…TIPS), 288-317 (QGAT…VKDD), 321-350 (EGRT…DIDI), 356-385 (YAGT…QVDA), 389-418 (MKHT…RVDL), 422-451 (DGHS…NPNV), 455-484 (AGRT…DPNI), 488-517 (EGRT…FPNH), and 523-553 (ERYT…SIAA). A D-box 1 motif is present at residues 490 to 498 (RTALHWLCN). Positions 555 to 584 (QDIAAFKIQAVYKGYKVRKAFQERKNLLMK) constitute an IQ 1 domain. Residues 589–607 (RKDAAAKKREEESKRKEAS) are compositionally biased toward basic and acidic residues. 4 disordered regions span residues 589 to 615 (RKDA…MQNM), 636 to 688 (LQLS…ELQS), 746 to 782 (ANGT…GNRG), and 809 to 833 (AVPK…CSPA). 2 stretches are compositionally biased toward polar residues: residues 636-645 (LQLSNKQTDL) and 653-666 (VSAS…NSRG). Positions 812-822 (KSKRHQQKSRH) are enriched in basic residues. Positions 944–952 (RKELFRKKN) match the D-box 2 motif. In terms of domain architecture, IQ 2 spans 951–980 (KNYAATVIQRTWRSYRLRQELSQLLSAKRQ).

In terms of assembly, binds calmodulin via its IQ domains. Interacts with APC2.

It is found in the cytoplasm. It localises to the cytoskeleton. Required for normal renal development and establishment of left-right axis. Probably acts as a molecular switch between different Wnt signaling pathways. Inhibits the canonical Wnt pathway by targeting cytoplasmic disheveled for degradation by the ubiquitin-proteasome. This suggests that it is required in renal development to oppose the repression of terminal differentiation of tubular epithelial cells by Wnt signaling. The protein is Inversin (INVS) of Gallus gallus (Chicken).